The primary structure comprises 303 residues: DnaJ homolog subfamily C member 17 (303 aa).

The 66-residue stretch at 11 to 76 (DLYALLGIEE…AARAAYDKVR (66 aa)) folds into the J domain. Disordered stretches follow at residues 104-123 (ERQA…SATT) and 150-170 (IRQD…GKGT). S112 carries the phosphoserine modification. Positions 150–166 (IRQDREQRLRGRTENTE) are enriched in basic and acidic residues. The region spanning 178–249 (KCKKEDESQG…NPLKVSWLEG (72 aa)) is the RRM domain. Position 264 is an N6-methyllysine (K264).

As to expression, expressed in the thyroid gland.

It localises to the cytoplasm. It is found in the nucleus. Functionally, may negatively affect PAX8-induced thyroglobulin/TG transcription. This Mus musculus (Mouse) protein is DnaJ homolog subfamily C member 17 (Dnajc17).